Consider the following 219-residue polypeptide: Probable 3-beta-hydroxysteroid-Delta(8),Delta(7)-isomerase (219 aa).

4 helical membrane-spanning segments follow: residues 29 to 49 (ILVP…LISG), 62 to 82 (LMCW…TFVF), 119 to 139 (VEGI…YAIA), and 181 to 201 (FWAY…MIAI). The region spanning 58 to 200 (TDRWLMCWWA…SWVVIPTMIA (143 aa)) is the EXPERA domain.

It belongs to the EBP family.

The protein resides in the endoplasmic reticulum membrane. It catalyses the reaction lathosterol = 5alpha-cholest-8-en-3beta-ol. It participates in steroid biosynthesis; sterol biosynthesis. Catalyzes the conversion of Delta(8)-sterols to their corresponding Delta(7)-isomers. This chain is Probable 3-beta-hydroxysteroid-Delta(8),Delta(7)-isomerase, found in Oryza sativa subsp. japonica (Rice).